A 148-amino-acid chain; its full sequence is Arginine repressor (148 aa).

This sequence belongs to the ArgR family.

The protein localises to the cytoplasm. The protein operates within amino-acid biosynthesis; L-arginine biosynthesis [regulation]. Functionally, regulates arginine biosynthesis genes. This chain is Arginine repressor, found in Chlorobium phaeobacteroides (strain BS1).